The chain runs to 273 residues: Octanoyltransferase LipM (273 aa).

The region spanning 33 to 244 (GKTPPTLRFY…AFTRLYAVEF (212 aa)) is the BPL/LPL catalytic domain. C146 acts as the Acyl-thioester intermediate in catalysis.

It belongs to the octanoyltransferase LipM family. As to quaternary structure, monomer.

The enzyme catalyses octanoyl-[ACP] + L-lysyl-[protein] = N(6)-octanoyl-L-lysyl-[protein] + holo-[ACP] + H(+). It functions in the pathway protein modification; protein lipoylation via endogenous pathway; protein N(6)-(lipoyl)lysine from octanoyl-[acyl-carrier-protein]. Catalyzes the transfer of endogenously produced octanoic acid from octanoyl-acyl-carrier-protein onto the lipoyl domain of GcvH, an intermediate carrier during protein lipoylation. The chain is Octanoyltransferase LipM from Moorella thermoacetica (strain ATCC 39073 / JCM 9320).